The sequence spans 132 residues: Interleukin-5 (132 aa).

Positions 1–17 (MRLPLQLSILTLAWVWA) are cleaved as a signal peptide. Residues N45, N74, and N88 are each glycosylated (N-linked (GlcNAc...) asparagine).

It belongs to the IL-5 family. Homodimer; disulfide-linked. Interacts with IL5RA. Interacts with CSF2RB.

It is found in the secreted. Functionally, homodimeric cytokine expressed predominantly by T-lymphocytes and NK cells that plays an important role in the survival, differentiation, and chemotaxis of eosinophils. Also acts on activated and resting B-cells to induce immunoglobulin production, growth, and differentiation. Mechanistically, exerts its biological effects through a receptor composed of IL5RA subunit and the cytokine receptor common subunit beta/CSF2RB. Binding to the receptor leads to activation of various kinases including LYN, SYK and JAK2 and thereby propagates signals through the RAS-MAPK and JAK-STAT5 pathways respectively. The polypeptide is Interleukin-5 (IL5) (Meriones unguiculatus (Mongolian jird)).